Here is a 422-residue protein sequence, read N- to C-terminus: Bifunctional enzyme IspD/IspF (422 aa).

The interval 1–267 (MAVGLLLLAA…PISALSMPLP (267 aa)) is 2-C-methyl-D-erythritol 4-phosphate cytidylyltransferase. The 2-C-methyl-D-erythritol 2,4-cyclodiphosphate synthase stretch occupies residues 268–422 (LIGVGIDFHK…AIAVAQIYHR (155 aa)). 2 residues coordinate a divalent metal cation: D274 and H276. 4-CDP-2-C-methyl-D-erythritol 2-phosphate is bound by residues 274 to 276 (DFH) and 301 to 302 (HS). H309 is a binding site for a divalent metal cation. Residues 323–325 (DIG), F404, and R407 contribute to the 4-CDP-2-C-methyl-D-erythritol 2-phosphate site.

In the N-terminal section; belongs to the IspD/TarI cytidylyltransferase family. IspD subfamily. It in the C-terminal section; belongs to the IspF family. A divalent metal cation serves as cofactor.

It carries out the reaction 2-C-methyl-D-erythritol 4-phosphate + CTP + H(+) = 4-CDP-2-C-methyl-D-erythritol + diphosphate. The catalysed reaction is 4-CDP-2-C-methyl-D-erythritol 2-phosphate = 2-C-methyl-D-erythritol 2,4-cyclic diphosphate + CMP. It participates in isoprenoid biosynthesis; isopentenyl diphosphate biosynthesis via DXP pathway; isopentenyl diphosphate from 1-deoxy-D-xylulose 5-phosphate: step 2/6. It functions in the pathway isoprenoid biosynthesis; isopentenyl diphosphate biosynthesis via DXP pathway; isopentenyl diphosphate from 1-deoxy-D-xylulose 5-phosphate: step 4/6. Functionally, bifunctional enzyme that catalyzes the formation of 4-diphosphocytidyl-2-C-methyl-D-erythritol from CTP and 2-C-methyl-D-erythritol 4-phosphate (MEP) (IspD), and catalyzes the conversion of 4-diphosphocytidyl-2-C-methyl-D-erythritol 2-phosphate (CDP-ME2P) to 2-C-methyl-D-erythritol 2,4-cyclodiphosphate (ME-CPP) with a corresponding release of cytidine 5-monophosphate (CMP) (IspF). The sequence is that of Bifunctional enzyme IspD/IspF from Tropheryma whipplei (strain TW08/27) (Whipple's bacillus).